The primary structure comprises 462 residues: MSQFPSSAIFTVSRLNQTVRQLLEMEMGQIWLSGEISNLSQPSSGHWYFTLKDERAQVRCAMFRTSNRRVTFRPQNGQQIIIRATITLYEPRGDYQLLAESMQPAGDGLLQQQFEQLKQRLAAEGLFDQQFKQVLPSPAKQVGVITSVSGAALHDILQVLQRRDPSLPVIVYPTSVQGAEAPLQIVRAIELANQRDECDVLIVGRGGGSLEDLWSFNDERVARAIFASRIPIVSAVGHETDVTIADFVGDLRAPTPSAAAELVSRNQLELLRQIQSQRQRLEMAMDYYLAQRNREFTRLHHRLQQQHPQLRLARQQAQLVKLRQRLDDAMQQQLRQTSRRSERLQQRLMQQQPQTRIHRAQQRLQQLSYQMQSAVDRQLNQNKQKLGVACSRLEGVSPLATLARGYNVTTASDGKVLKNVAQITPGETLKTRLQDGWVESQVTTLAPNLSSVKKRRKSSSQS.

Belongs to the XseA family. As to quaternary structure, heterooligomer composed of large and small subunits.

The protein resides in the cytoplasm. It catalyses the reaction Exonucleolytic cleavage in either 5'- to 3'- or 3'- to 5'-direction to yield nucleoside 5'-phosphates.. In terms of biological role, bidirectionally degrades single-stranded DNA into large acid-insoluble oligonucleotides, which are then degraded further into small acid-soluble oligonucleotides. This Pectobacterium atrosepticum (strain SCRI 1043 / ATCC BAA-672) (Erwinia carotovora subsp. atroseptica) protein is Exodeoxyribonuclease 7 large subunit.